The sequence spans 359 residues: Ornithine carbamoyltransferase, mitochondrial (359 aa).

The transit peptide at Met-1 to Thr-24 directs the protein to the mitochondrion. Carbamoyl phosphate is bound by residues Ser-87 to Thr-90, Arg-138, His-165, and Gln-168. Residues Asn-205, Asp-271, Ser-275, and Met-276 each coordinate L-ornithine. Residue Cys-313 is the Proton acceptor of the active site. Carbamoyl phosphate contacts are provided by residues Cys-313–Leu-314 and Arg-340.

The protein belongs to the aspartate/ornithine carbamoyltransferase superfamily. OTCase family. Homotrimer.

The protein localises to the mitochondrion matrix. It carries out the reaction carbamoyl phosphate + L-ornithine = L-citrulline + phosphate + H(+). It functions in the pathway amino-acid biosynthesis; L-arginine biosynthesis; L-arginine from L-ornithine and carbamoyl phosphate: step 1/3. The sequence is that of Ornithine carbamoyltransferase, mitochondrial (argB) from Emericella nidulans (strain FGSC A4 / ATCC 38163 / CBS 112.46 / NRRL 194 / M139) (Aspergillus nidulans).